A 338-amino-acid chain; its full sequence is Holliday junction branch migration complex subunit RuvB (338 aa).

Positions 4-185 (EDQKILDAKP…FGIVAHMQFY (182 aa)) are large ATPase domain (RuvB-L). ATP-binding positions include L24, R25, G66, K69, T70, T71, 132–134 (EDF), R175, Y185, and R222. T70 serves as a coordination point for Mg(2+). Residues 186 to 256 (PVSDLKLIAK…IVDNALNKLH (71 aa)) form a small ATPAse domain (RuvB-S) region. A head domain (RuvB-H) region spans residues 259–338 (ARGLDETDLK…LQIPYQTGLS (80 aa)). 2 residues coordinate DNA: R314 and R319.

The protein belongs to the RuvB family. In terms of assembly, homohexamer. Forms an RuvA(8)-RuvB(12)-Holliday junction (HJ) complex. HJ DNA is sandwiched between 2 RuvA tetramers; dsDNA enters through RuvA and exits via RuvB. An RuvB hexamer assembles on each DNA strand where it exits the tetramer. Each RuvB hexamer is contacted by two RuvA subunits (via domain III) on 2 adjacent RuvB subunits; this complex drives branch migration. In the full resolvosome a probable DNA-RuvA(4)-RuvB(12)-RuvC(2) complex forms which resolves the HJ.

The protein resides in the cytoplasm. It catalyses the reaction ATP + H2O = ADP + phosphate + H(+). Functionally, the RuvA-RuvB-RuvC complex processes Holliday junction (HJ) DNA during genetic recombination and DNA repair, while the RuvA-RuvB complex plays an important role in the rescue of blocked DNA replication forks via replication fork reversal (RFR). RuvA specifically binds to HJ cruciform DNA, conferring on it an open structure. The RuvB hexamer acts as an ATP-dependent pump, pulling dsDNA into and through the RuvAB complex. RuvB forms 2 homohexamers on either side of HJ DNA bound by 1 or 2 RuvA tetramers; 4 subunits per hexamer contact DNA at a time. Coordinated motions by a converter formed by DNA-disengaged RuvB subunits stimulates ATP hydrolysis and nucleotide exchange. Immobilization of the converter enables RuvB to convert the ATP-contained energy into a lever motion, pulling 2 nucleotides of DNA out of the RuvA tetramer per ATP hydrolyzed, thus driving DNA branch migration. The RuvB motors rotate together with the DNA substrate, which together with the progressing nucleotide cycle form the mechanistic basis for DNA recombination by continuous HJ branch migration. Branch migration allows RuvC to scan DNA until it finds its consensus sequence, where it cleaves and resolves cruciform DNA. In Oenococcus oeni (strain ATCC BAA-331 / PSU-1), this protein is Holliday junction branch migration complex subunit RuvB.